Here is a 1700-residue protein sequence, read N- to C-terminus: Ras-responsive element-binding protein 1 (1700 aa).

Positions Thr-31 to Lys-63 are disordered. 2 positions are modified to phosphoserine: Ser-36 and Ser-42. 3 consecutive C2H2-type zinc fingers follow at residues Tyr-66–His-88, His-97–His-119, and Tyr-125–His-147. Residues Ile-146 to Ser-195 form a disordered region. Residue Ser-161 is modified to Phosphoserine. Residues Leu-163 to Leu-174 are compositionally biased toward basic residues. Residues Ser-175 and Ser-180 each carry the phosphoserine modification. Over residues Gly-184–Ser-195 the composition is skewed to basic and acidic residues. Residues Phe-206–His-228 form a C2H2-type 4 zinc finger. Ser-229 bears the Phosphoserine mark. C2H2-type zinc fingers lie at residues Leu-233 to His-256 and Phe-314 to His-336. Glycyl lysine isopeptide (Lys-Gly) (interchain with G-Cter in SUMO2) cross-links involve residues Lys-433, Lys-500, Lys-549, Lys-564, Lys-591, and Lys-611. Lys-613 is covalently cross-linked (Glycyl lysine isopeptide (Lys-Gly) (interchain with G-Cter in SUMO1); alternate). A Glycyl lysine isopeptide (Lys-Gly) (interchain with G-Cter in SUMO2); alternate cross-link involves residue Lys-613. Lys-622 is covalently cross-linked (Glycyl lysine isopeptide (Lys-Gly) (interchain with G-Cter in SUMO2)). 5 C2H2-type zinc fingers span residues Tyr-641 to His-663, Tyr-669 to His-691, Tyr-697 to His-720, Thr-751 to His-782, and Phe-788 to His-813. Glycyl lysine isopeptide (Lys-Gly) (interchain with G-Cter in SUMO2) cross-links involve residues Lys-855, Lys-883, and Lys-911. 2 disordered regions span residues Ile-939–Thr-991 and Ala-1092–Leu-1177. Basic and acidic residues predominate over residues Lys-944–Pro-961. Ser-970 is subject to Phosphoserine. A compositionally biased stretch (polar residues) spans Ser-1097–Ser-1111. Residues Ser-1125, Ser-1137, and Ser-1138 each carry the phosphoserine modification. A compositionally biased stretch (low complexity) spans Ser-1137–Glu-1146. Over residues Ser-1155–Arg-1165 the composition is skewed to basic residues. A phosphoserine mark is found at Ser-1172, Ser-1179, Ser-1180, and Ser-1230. Disordered regions lie at residues Thr-1195–Arg-1235, His-1273–Asp-1368, Ser-1383–Val-1521, and Val-1564–Ala-1670. The segment at Ile-1251 to His-1273 adopts a C2H2-type 12 zinc-finger fold. The segment covering His-1273 to Thr-1285 has biased composition (low complexity). Residues Ser-1327–Arg-1346 show a composition bias toward acidic residues. The C2H2-type 13 zinc finger occupies His-1400–His-1422. Phosphoserine occurs at positions 1450 and 1452. A compositionally biased stretch (basic and acidic residues) spans Thr-1492–Ser-1507. C2H2-type zinc fingers lie at residues Lys-1520–His-1542 and Tyr-1548–His-1570. Residues Val-1564–Gly-1580 are compositionally biased toward basic residues. A phosphoserine mark is found at Ser-1593 and Ser-1606. Over residues Ala-1645 to Pro-1660 the composition is skewed to low complexity. Ser-1667 is subject to Phosphoserine.

The protein belongs to the krueppel C2H2-type zinc-finger protein family. Interacts with NEUROD1. Interacts with AR. In terms of tissue distribution, expressed in splenic B-cells.

Its subcellular location is the nucleus speckle. Transcription factor that binds specifically to the RAS-responsive elements (RRE) of gene promoters. Represses the angiotensinogen gene. Negatively regulates the transcriptional activity of AR. Potentiates the transcriptional activity of NEUROD1. Binds specifically to the allelic variant of the CDKN2A promoter present in Balb/c mice, which leads to a down-regulation of CDKN2A expression in this strain, and, as a consequence, to an elevated susceptibility to pristane-induced tumors. Promotes brown adipocyte differentiation. May be involved in Ras/Raf-mediated cell differentiation by enhancing calcitonin expression. The chain is Ras-responsive element-binding protein 1 (Rreb1) from Mus musculus (Mouse).